Consider the following 194-residue polypeptide: Acid tolerance regulatory protein ActR (194 aa).

Residues 24 to 138 (SLLIVDDDTA…DILAALIQRP (115 aa)) enclose the Response regulatory domain. At aspartate 73 the chain carries 4-aspartylphosphate.

Post-translationally, phosphorylated by ActS.

Member of the two-component regulatory system ActS/ActR acting in acid tolerance. These data implicate that a two-component sensor may be involved in pH sensing and/or response. This is Acid tolerance regulatory protein ActR (actR) from Rhizobium meliloti (strain 1021) (Ensifer meliloti).